The chain runs to 372 residues: Bifunctional enzyme IspD/IspF (372 aa).

Residues 1–211 are 2-C-methyl-D-erythritol 4-phosphate cytidylyltransferase; the sequence is MLDISLIMLG…SALKAPENEL (211 aa). The tract at residues 212 to 372 is 2-C-methyl-D-erythritol 2,4-cyclodiphosphate synthase; that stretch reads FVGSGFDVHE…SLKFYNWTQI (161 aa). Positions 218 and 220 each coordinate a divalent metal cation. Residues 218–220 and 244–245 contribute to the 4-CDP-2-C-methyl-D-erythritol 2-phosphate site; these read DVH and HS. H252 lines the a divalent metal cation pocket. 4-CDP-2-C-methyl-D-erythritol 2-phosphate is bound by residues 266-268, 271-275, 342-345, F349, and R352; these read DIG, FPDTD, and TTTE.

The protein in the N-terminal section; belongs to the IspD/TarI cytidylyltransferase family. IspD subfamily. It in the C-terminal section; belongs to the IspF family. A divalent metal cation serves as cofactor.

The enzyme catalyses 2-C-methyl-D-erythritol 4-phosphate + CTP + H(+) = 4-CDP-2-C-methyl-D-erythritol + diphosphate. It catalyses the reaction 4-CDP-2-C-methyl-D-erythritol 2-phosphate = 2-C-methyl-D-erythritol 2,4-cyclic diphosphate + CMP. It functions in the pathway isoprenoid biosynthesis; isopentenyl diphosphate biosynthesis via DXP pathway; isopentenyl diphosphate from 1-deoxy-D-xylulose 5-phosphate: step 2/6. The protein operates within isoprenoid biosynthesis; isopentenyl diphosphate biosynthesis via DXP pathway; isopentenyl diphosphate from 1-deoxy-D-xylulose 5-phosphate: step 4/6. Its function is as follows. Bifunctional enzyme that catalyzes the formation of 4-diphosphocytidyl-2-C-methyl-D-erythritol from CTP and 2-C-methyl-D-erythritol 4-phosphate (MEP) (IspD), and catalyzes the conversion of 4-diphosphocytidyl-2-C-methyl-D-erythritol 2-phosphate (CDP-ME2P) to 2-C-methyl-D-erythritol 2,4-cyclodiphosphate (ME-CPP) with a corresponding release of cytidine 5-monophosphate (CMP) (IspF). In Campylobacter concisus (strain 13826), this protein is Bifunctional enzyme IspD/IspF.